Reading from the N-terminus, the 345-residue chain is Diacylglycerol O-acyltransferase 1 (345 aa).

The Cytoplasmic segment spans residues Met1–Thr49. The helical transmembrane segment at Val50–Tyr70 threads the bilayer. At Asp71 to Asn113 the chain is on the lumenal side. The helical transmembrane segment at Tyr114 to Ser134 threads the bilayer. At Glu135–Lys141 the chain is on the cytoplasmic side. Residues Leu142–Tyr162 traverse the membrane as a helical segment. The Lumenal portion of the chain corresponds to Arg163–Arg216. The helical transmembrane segment at Phe217–Gly237 threads the bilayer. The Cytoplasmic segment spans residues Glu238–Ala345.

This sequence belongs to the diacylglycerol acyltransferase family.

It localises to the lipid droplet. Its subcellular location is the endoplasmic reticulum membrane. It catalyses the reaction an acyl-CoA + a 1,2-diacyl-sn-glycerol = a triacyl-sn-glycerol + CoA. The enzyme catalyses a 2-acylglycerol + an acyl-CoA = a 1,2-diacyl-sn-glycerol + CoA. Its pathway is glycerolipid metabolism; triacylglycerol biosynthesis. Functionally, catalyzes the terminal and only committed step in triacylglycerol (TAG) synthesis by using diacylglycerol (DAG) and fatty acyl-CoA as substrates. Required for storage lipid synthesis. Major DAG esterifying enzyme in stationary phase when TAG production is particularly active. Involved in lipid particle synthesis from the endoplasmic reticulum, promoting localized TAG production at discrete ER subdomains. This is Diacylglycerol O-acyltransferase 1 (dga1) from Schizosaccharomyces pombe (strain 972 / ATCC 24843) (Fission yeast).